Consider the following 349-residue polypeptide: MDLRLYTIFVGFFSVVYAQRTPTISYISQEQIKDIGGTVELECSVQYAQDYPVLWMKVDRNRQVDPLPISTGSSLIIRDSRFALRYDTASSTYTLQIKDIQETDAGFYQCQVIIGLNNKITAEVDLQVRRPPVISDNSTRSLVVSEGQAVRLECYAGGYPAPRVSWRRENNAILPTGGSIYRGNVLKISRIGKEDRGTYYCVAENGVGKGARRNIAVEVEFPPVITVPRPRLGQALQYDMDLECHVEAYPPPAITWLKDETVLSNNQHYSISHFATADEFTDTTRVITIEKRQYGKYQCKAANKLGEAREEVELFETIIPVCPPACGQAYGGDAAEISTSMALILISTI.

The N-terminal stretch at 1–18 (MDLRLYTIFVGFFSVVYA) is a signal peptide. The region spanning 22–127 (PTISYISQEQ…NKITAEVDLQ (106 aa)) is the Ig-like V-type domain. C43 and C110 are joined by a disulfide. Ig-like C2-type domains lie at 132 to 218 (PVIS…IAVE) and 222 to 315 (PPVI…VELF). N-linked (GlcNAc...) asparagine glycosylation is present at N137. 2 disulfide bridges follow: C154/C201 and C244/C299. G332 is lipidated: GPI-anchor amidated glycine. The propeptide at 333 to 349 (DAAEISTSMALILISTI) is removed in mature form.

The N-terminus is blocked. Expressed by all neurogenic cells early, but only those cells that become neuroblasts continue to express it. Expressed by neuroblasts, ganglion mother cells and neurons early in their lives, but expression becomes restricted to a subset of neurons as development progresses. Expressed by sensory neurons as they delaminate from the body wall ectoderm. It is also present on growing axons of the CNS and PNS and becomes restricted to a subset of axons later in development.

The protein localises to the cell membrane. Its function is as follows. May play a role in early neuronal differentiation and axon outgrowth. The protein is Lachesin (LAC) of Schistocerca americana (American grasshopper).